The sequence spans 480 residues: MPDAFPFDNTYASLPDRFFTRMSPKPVAEPGLIAVNRPLAERLGITLGESDAELAQLFAGNVVPMGAAPLAQVYAGHQFGGWSQQLGDGRAVMLGEVVAPDGARFDVQLKGAGQTPYSRMGDGRAWLGPVLREYIVSEAMAALGIPTTRALAAVTTGEIVLREARMPGAVLTRVAASHIRVGTFQYFAARQDVDALQALLDHTIARHYPDVDGPSGLLDAALQAQADLIAKWMGVGFIHGVMNTDNMTLSGETIDYGPCAFMDTYEANKVFSSIDQFGRYAYAQQPQIAAWNLAQLATALLPLMPDRDAAIEEFTEAVNGFAARFDTAWHGVLRAKLGLVSEQEGDAQLAFDLLNRMEQGGGDFTQVFRALSGPEPERAAEAFAAPAVLAPWLKAWRARLARDNVAKAARIASMQADNPALIPRNHRIEEVIQAAVKGDFAPFERLTTALQDPFTDRPEFADLQATPARSEAVTQTFCGT.

Positions 87, 89, 90, 110, 122, 123, 173, and 180 each coordinate ATP. The Proton acceptor role is filled by Asp245. Mg(2+)-binding residues include Asn246 and Asp255. Residue Asp255 participates in ATP binding.

This sequence belongs to the SELO family. Mg(2+) is required as a cofactor. It depends on Mn(2+) as a cofactor.

It carries out the reaction L-seryl-[protein] + ATP = 3-O-(5'-adenylyl)-L-seryl-[protein] + diphosphate. It catalyses the reaction L-threonyl-[protein] + ATP = 3-O-(5'-adenylyl)-L-threonyl-[protein] + diphosphate. The enzyme catalyses L-tyrosyl-[protein] + ATP = O-(5'-adenylyl)-L-tyrosyl-[protein] + diphosphate. The catalysed reaction is L-histidyl-[protein] + UTP = N(tele)-(5'-uridylyl)-L-histidyl-[protein] + diphosphate. It carries out the reaction L-seryl-[protein] + UTP = O-(5'-uridylyl)-L-seryl-[protein] + diphosphate. It catalyses the reaction L-tyrosyl-[protein] + UTP = O-(5'-uridylyl)-L-tyrosyl-[protein] + diphosphate. Its function is as follows. Nucleotidyltransferase involved in the post-translational modification of proteins. It can catalyze the addition of adenosine monophosphate (AMP) or uridine monophosphate (UMP) to a protein, resulting in modifications known as AMPylation and UMPylation. In Jannaschia sp. (strain CCS1), this protein is Protein nucleotidyltransferase YdiU.